We begin with the raw amino-acid sequence, 202 residues long: ATP-dependent Clp protease proteolytic subunit 1 (202 aa).

Ser99 serves as the catalytic Nucleophile. The active site involves His123.

This sequence belongs to the peptidase S14 family. In terms of assembly, fourteen ClpP subunits assemble into 2 heptameric rings which stack back to back to give a disk-like structure with a central cavity, resembling the structure of eukaryotic proteasomes.

Its subcellular location is the cytoplasm. It carries out the reaction Hydrolysis of proteins to small peptides in the presence of ATP and magnesium. alpha-casein is the usual test substrate. In the absence of ATP, only oligopeptides shorter than five residues are hydrolyzed (such as succinyl-Leu-Tyr-|-NHMec, and Leu-Tyr-Leu-|-Tyr-Trp, in which cleavage of the -Tyr-|-Leu- and -Tyr-|-Trp bonds also occurs).. Cleaves peptides in various proteins in a process that requires ATP hydrolysis. Has a chymotrypsin-like activity. Plays a major role in the degradation of misfolded proteins. This is ATP-dependent Clp protease proteolytic subunit 1 from Symbiobacterium thermophilum (strain DSM 24528 / JCM 14929 / IAM 14863 / T).